A 145-amino-acid polypeptide reads, in one-letter code: Mitochondrial import receptor subunit TOM20 homolog (145 aa).

Topologically, residues 1–6 are mitochondrial intermembrane; that stretch reads MVGRNS. Residues 7 to 24 traverse the membrane as a helical segment; sequence AIAAGVCGALFIGYCIYF. Residues 25 to 145 are Cytoplasmic-facing; sequence DRKRRSDPNF…AQSLAEDDVE (121 aa). Residues lysine 35, lysine 56, lysine 61, and lysine 68 each participate in a glycyl lysine isopeptide (Lys-Gly) (interchain with G-Cter in ubiquitin) cross-link. A phosphoserine mark is found at serine 135 and serine 138.

The protein belongs to the Tom20 family. In terms of assembly, forms part of the preprotein translocase complex of the outer mitochondrial membrane (TOM complex) which consists of at least 7 different proteins (TOMM5, TOMM6, TOMM7, TOMM20, TOMM22, TOMM40 and TOMM70). Interacts with TOM22. Interacts with APEX1. Interacts with TBC1D21. Upon mitochondrial depolarization, interacts with PINK1; the interaction is required for PINK1-TOM-TIM23 supercomplex formation which is critical for PINK1 stabilization at the outer mitochondrial membrane, kinase activation and downstream mitophagy. In terms of processing, ubiquitinated by PRKN during mitophagy, leading to its degradation and enhancement of mitophagy. Deubiquitinated by USP30. Expressed in brain, kidney, stomach, colon, jejunum, ileum, testis, ovary and oviduct (at protein level). In the brain, expressed in neural cells of the cerebrum and cerebellum (at protein level). In the kidney, expressed in the proximal to distal tubule in the cortex and the outer and inner zones of the medulla (at protein level). In the stomach, expressed in the basal layer of stratified squamous epithelia in the forestomach and in the gastric pit and fundic gland of the glandular stomach (at protein level). Expressed in epithelial cells of the jejunum, ileum, and colon (at protein level). In the testis, expressed by spermatocytes and spermatogonia (at protein level). In the ovaries, expressed by follicular epithelial cells and corpus luteum cells (at protein level). In the oviduct, expressed in the epithelia of the isthmus and the ciliated cells of the ampulla (at protein level). Expressed in the sperm midpiece (at protein level).

The protein resides in the mitochondrion outer membrane. Central component of the receptor complex responsible for the recognition and translocation of cytosolically synthesized mitochondrial preproteins. Together with TOM22 functions as the transit peptide receptor at the surface of the mitochondrion outer membrane and facilitates the movement of preproteins into the TOM40 translocation pore. Required for the translocation across the mitochondrial outer membrane of cytochrome P450 monooxygenases. The sequence is that of Mitochondrial import receptor subunit TOM20 homolog (Tomm20) from Mus musculus (Mouse).